A 599-amino-acid chain; its full sequence is Laccase-15 (599 aa).

The signal sequence occupies residues 1 to 29 (MKRCQSSRPTAAVAAVVAAVSMIIVLVSG). 2 Plastocyanin-like domains span residues 46 to 162 (VVSQ…PRHG) and 173 to 328 (REVP…YSSN). Residues asparagine 51 and asparagine 92 are each glycosylated (N-linked (GlcNAc...) asparagine). Residues histidine 96 and histidine 98 each contribute to the Cu cation site. An N-linked (GlcNAc...) asparagine glycan is attached at asparagine 124. The Cu cation site is built by histidine 141 and histidine 143. 6 N-linked (GlcNAc...) asparagine glycosylation sites follow: asparagine 193, asparagine 217, asparagine 331, asparagine 355, asparagine 412, and asparagine 454. Residues 444 to 586 (ELAERPPRAY…AAVFIVEDGP (143 aa)) enclose the Plastocyanin-like 3 domain. Cu cation is bound by residues asparagine 503, histidine 506, histidine 508, histidine 565, cysteine 566, histidine 567, histidine 571, and methionine 576.

Belongs to the multicopper oxidase family. The cofactor is Cu cation.

It localises to the secreted. Its subcellular location is the extracellular space. It is found in the apoplast. The catalysed reaction is 4 hydroquinone + O2 = 4 benzosemiquinone + 2 H2O. Its function is as follows. Lignin degradation and detoxification of lignin-derived products. The protein is Laccase-15 (LAC15) of Oryza sativa subsp. japonica (Rice).